The chain runs to 381 residues: MKQFKRGIERDGTGFVVLMAEEAEDMWHIYNLIRIGDIIKASTIRKVVSETSTGTTSSQRVHTMLTVSVESIDFDPGAQELHLKGRNIEENDIVKLGAYHTIDLEPNRKFTLQKTEWDSIDLERLNLALDPAQAADVAAVVLHEGLANVCLITPAMTLTRAKIDMTIPRKRKGFTSQHEKGLEKFYEAVSTAFMRHVNLQVVKCVIVASRGFVKDAFMQHLIAHADANGKKFTTEQRAKFMLTHSSSGFKHALKEVLETPQVALRLADTKAQGEVKALNQFLELMSTEPDRAFYGFNHVNRANQELAIETLLVADSLFRAQDIETRRKYVRLVESVREQNGKVHIFSSMHVSGEQLAQLTGCAAILRFPMPDLDDEPMDEN.

Belongs to the eukaryotic release factor 1 family. Pelota subfamily. As to quaternary structure, component of the Pelota-HBS1L complex, also named Dom34-Hbs1 complex, composed of pelo-1 and hbs-1. A divalent metal cation is required as a cofactor.

It is found in the cytoplasm. The protein resides in the nucleus. Functionally, component of the Pelota-HBS1L complex, a complex that recognizes stalled ribosomes and triggers the No-Go Decay (NGD) pathway. In the Pelota-HBS1L complex, pelo-1 recognizes ribosomes stalled at the 3' end of an mRNA and engages stalled ribosomes by destabilizing mRNA in the mRNA channel. Following ribosome-binding, the Pelota-HBS1L complex promotes the disassembly of stalled ribosomes, followed by degradation of damaged mRNAs as part of the NGD pathway. This Caenorhabditis elegans protein is Protein pelota homolog.